We begin with the raw amino-acid sequence, 1176 residues long: Pesticidal crystal protein Cry1Aa (1176 aa).

The protein belongs to the delta endotoxin family.

Functionally, promotes colloidosmotic lysis by binding to the midgut epithelial cells of many lepidopteran larvae. The sequence is that of Pesticidal crystal protein Cry1Aa (cry1Aa) from Bacillus thuringiensis subsp. entomocidus.